The following is a 158-amino-acid chain: Sec-independent protein translocase protein TatB (158 aa).

The helical transmembrane segment at 1–21 (MFGISFSELLLVGLVALLVLG) threads the bilayer. The disordered stretch occupies residues 73 to 158 (DEARKMFAPN…HDSSLPPRAP (86 aa)). Over residues 80 to 90 (APNQPSENSPE) the composition is skewed to low complexity.

Belongs to the TatB family. As to quaternary structure, the Tat system comprises two distinct complexes: a TatABC complex, containing multiple copies of TatA, TatB and TatC subunits, and a separate TatA complex, containing only TatA subunits. Substrates initially bind to the TatABC complex, which probably triggers association of the separate TatA complex to form the active translocon.

Its subcellular location is the cell inner membrane. In terms of biological role, part of the twin-arginine translocation (Tat) system that transports large folded proteins containing a characteristic twin-arginine motif in their signal peptide across membranes. Together with TatC, TatB is part of a receptor directly interacting with Tat signal peptides. TatB may form an oligomeric binding site that transiently accommodates folded Tat precursor proteins before their translocation. This Pseudomonas syringae pv. syringae (strain B728a) protein is Sec-independent protein translocase protein TatB.